The primary structure comprises 448 residues: Deoxyguanosinetriphosphate triphosphohydrolase-like protein (448 aa).

The region spanning 67-260 (RLTHSLEVSQ…MELADDIAYG (194 aa)) is the HD domain.

This sequence belongs to the dGTPase family. Type 2 subfamily.

This is Deoxyguanosinetriphosphate triphosphohydrolase-like protein from Aliivibrio salmonicida (strain LFI1238) (Vibrio salmonicida (strain LFI1238)).